We begin with the raw amino-acid sequence, 401 residues long: Putative TRAP transporter large permease protein HI_0050 (401 aa).

The next 11 helical transmembrane spans lie at 31–51 (FPLMAIPFFMLTGEIMKHGGI), 70–90 (LGYVAIISGLIFAGLSGSAVA), 115–135 (GLICAAGIISVVIPPSIPMII), 144–164 (ITKLFMGGTVPGLLMVVGLWV), 193–213 (AFWPLLLPIIIIVGLRGGIFT), 217–237 (AGVVAAIYAGIVSIAYKGLTF), 253–273 (MVMFVAASAMISAFAITVAQI), 290–310 (ILMFIIMLFLLLVGCVMDLIP), 330–350 (IAYFGIMMVINLSIGLITPPV), 353–373 (VLYVGSGISKLGIGALSKGIA), and 375–395 (FLFVYAIIMMLIVFFPEIVIV).

It belongs to the TRAP transporter large permease family.

It is found in the cell inner membrane. This is Putative TRAP transporter large permease protein HI_0050 from Haemophilus influenzae (strain ATCC 51907 / DSM 11121 / KW20 / Rd).